Consider the following 469-residue polypeptide: Calcium-binding mitochondrial carrier protein SCaMC-2-B (469 aa).

Residues 1-189 are Mitochondrial intermembrane-facing; the sequence is MLCLCLYVPV…EKNTGMWWRH (189 aa). 3 EF-hand domains span residues 47–80, 78–113, and 114–149; these read SYRK…RDHE, DHEK…LGVH, and ISEE…HPAE. Residues Asp-60, Asp-62, Asp-64, Gln-66, and Glu-71 each coordinate Ca(2+). 3 Solcar repeats span residues 184–270, 278–363, and 375–463; these read GMWW…IKRL, LGIL…LKNS, and PGVF…LKIT. Residues 190–207 traverse the membrane as a helical segment; it reads LVAGGGAGAVSRTCTAPL. Residues 208 to 244 lie on the Mitochondrial matrix side of the membrane; it reads DRLKVLMQVHATRSNSMGIAGGFTQMIREGGLRSLWR. The helical transmembrane segment at 245 to 264 threads the bilayer; it reads GNGINVLKIAPESAIKFMAY. Topologically, residues 265-287 are mitochondrial intermembrane; that stretch reads EQIKRLIGSNQETLGILERLVSG. A helical transmembrane segment spans residues 288 to 301; it reads SLAGAIAQSSIYPM. Residues 302–337 lie on the Mitochondrial matrix side of the membrane; sequence EVLKTRLALGRTGQYSGIADCAKHIFKKEGMTAFYK. A helical membrane pass occupies residues 338–357; sequence GYIPNMLGIIPYAGIDLAVY. Over 358-380 the chain is Mitochondrial intermembrane; the sequence is ETLKNSWLQRFATDSADPGVFVL. Residues 381–398 traverse the membrane as a helical segment; it reads LACGTMSSTCGQLASYPL. The Mitochondrial matrix portion of the chain corresponds to 399 to 437; sequence ALVRTRMQAQASQEGSPQMTMSGLFRHIVRTEGAIGLYR. A helical transmembrane segment spans residues 438-457; the sequence is GLAPNFMKVIPAVSISYVVY. Residues 458–469 are Mitochondrial intermembrane-facing; the sequence is ENLKITLGVQSR.

The protein belongs to the mitochondrial carrier (TC 2.A.29) family.

It is found in the mitochondrion inner membrane. Calcium-dependent mitochondrial solute carrier. This chain is Calcium-binding mitochondrial carrier protein SCaMC-2-B (slc25a25b), found in Danio rerio (Zebrafish).